The chain runs to 1254 residues: Protein transport protein Sec31A (1254 aa).

WD repeat units follow at residues 4 to 47 (KEIN…EIFE), 64 to 111 (SSPH…AGDS), 120 to 160 (KHTG…SPMT), 166 to 206 (QPQE…LIIK), 209 to 254 (DHSN…SPLK), 258 to 298 (NHTR…VLYE), and 301 to 341 (TSTQ…NDNA). Residues 364–383 (TLPPLQLPQQTSPQSTITPL) show a composition bias toward low complexity. The interval 364-386 (TLPPLQLPQQTSPQSTITPLKKP) is disordered. One copy of the WD 8; interaction with SEC13 repeat lies at 397–428 (SFAFGGKLVTLDNIKPTAQQPQQTAAHVVHIS). Disordered stretches follow at residues 818–892 (PMQT…QSPA), 983–1008 (CFQHGGPGSPTSYLPPPGARAPGTQH), and 1058–1125 (PPAP…PGAP). Low complexity predominate over residues 832 to 846 (AQPAAPAVPPQYYQQ). Composition is skewed to polar residues over residues 847–863 (GRSATTVTSWSNQTPTA) and 872–881 (VPSSDPQGDS). Residues 1080-1091 (QTLQPQQQVPDQ) show a composition bias toward low complexity.

This sequence belongs to the WD repeat SEC31 family. In terms of assembly, COPII is composed of at least 5 proteins: the SEC23/24 complex, the SEC13/31 complex and SAR1. SEC13 and SEC31 make a 2:2 tetramer that forms the edge element of the COPII outer coat. The tetramer self-assembles in multiple copies to form the complete polyhedral cage. Interacts (via WD 8) with SEC13.

The protein localises to the cytoplasm. It is found in the cytoplasmic vesicle. Its subcellular location is the COPII-coated vesicle membrane. The protein resides in the endoplasmic reticulum membrane. Functionally, component of the coat protein complex II (COPII) which promotes the formation of transport vesicles from the endoplasmic reticulum (ER). The coat has two main functions, the physical deformation of the endoplasmic reticulum membrane into vesicles and the selection of cargo molecules. The sequence is that of Protein transport protein Sec31A (sec31a) from Danio rerio (Zebrafish).